A 309-amino-acid chain; its full sequence is Porphobilinogen deaminase (309 aa).

Residue C242 is modified to S-(dipyrrolylmethanemethyl)cysteine.

The protein belongs to the HMBS family. Monomer. The cofactor is dipyrromethane.

The catalysed reaction is 4 porphobilinogen + H2O = hydroxymethylbilane + 4 NH4(+). The protein operates within porphyrin-containing compound metabolism; protoporphyrin-IX biosynthesis; coproporphyrinogen-III from 5-aminolevulinate: step 2/4. Tetrapolymerization of the monopyrrole PBG into the hydroxymethylbilane pre-uroporphyrinogen in several discrete steps. This is Porphobilinogen deaminase from Legionella pneumophila (strain Lens).